The primary structure comprises 423 residues: Calcium up-regulated protein A (423 aa).

Basic and acidic residues predominate over residues 1–19 (MINIEDISKSSNESEEKQL). Residues 1–27 (MINIEDISKSSNESEEKQLKSTSTSSK) are disordered. Ricin B-type lectin domains lie at 27-147 (KPKY…WTTF) and 118-251 (QGNG…WGIN).

The protein belongs to the cup family.

Its subcellular location is the cytoplasm. The protein localises to the membrane. Its function is as follows. May play an important role in stabilizing and/or regulating the cell membrane during Ca(2+) stress or certain stages of development. The protein is Calcium up-regulated protein A (cupA) of Dictyostelium discoideum (Social amoeba).